A 232-amino-acid chain; its full sequence is Ion-translocating oxidoreductase complex subunit E (232 aa).

Helical transmembrane passes span 18–38 (GLVQ…ITNA), 39–59 (LGLG…VSLV), 69–89 (IPVF…LINA), 93–113 (GLYL…IIIG), 127–147 (AAFD…VLGA), and 182–202 (PFLL…LIAL).

Belongs to the NqrDE/RnfAE family. The complex is composed of six subunits: RnfA, RnfB, RnfC, RnfD, RnfE and RnfG.

The protein resides in the cell inner membrane. Its function is as follows. Part of a membrane-bound complex that couples electron transfer with translocation of ions across the membrane. The polypeptide is Ion-translocating oxidoreductase complex subunit E (Shewanella baltica (strain OS185)).